A 953-amino-acid polypeptide reads, in one-letter code: Catenin alpha-2 (953 aa).

Residue Thr632 is modified to Phosphothreonine. Residues Ser640, Ser651, and Ser901 each carry the phosphoserine modification. The span at 912-927 (EKKPLVKREKPEEFQT) shows a compositional bias: basic and acidic residues. The interval 912-939 (EKKPLVKREKPEEFQTRVRRGSQKKHIS) is disordered. Basic residues predominate over residues 928-938 (RVRRGSQKKHI). Phosphoserine is present on Ser939.

It belongs to the vinculin/alpha-catenin family. In terms of assembly, interacts with CDH1 and CDH2. Interacts with ZNF639; recruits CTNNA2 to the nucleus. Interacts with F-actin. Expressed almost exclusively in the nervous system.

The protein resides in the cell membrane. It localises to the cytoplasm. The protein localises to the cytoskeleton. It is found in the cell junction. Its subcellular location is the adherens junction. The protein resides in the cell projection. It localises to the axon. The protein localises to the nucleus. Its function is as follows. May function as a linker between cadherin adhesion receptors and the cytoskeleton to regulate cell-cell adhesion and differentiation in the nervous system. Required for proper regulation of cortical neuronal migration and neurite growth. It acts as a negative regulator of Arp2/3 complex activity and Arp2/3-mediated actin polymerization. It thereby suppresses excessive actin branching which would impair neurite growth and stability. Regulates morphological plasticity of synapses and cerebellar and hippocampal lamination during development. Functions in the control of startle modulation. This chain is Catenin alpha-2 (Ctnna2), found in Mus musculus (Mouse).